Reading from the N-terminus, the 327-residue chain is Serine/threonine-protein phosphatase PP1-beta catalytic subunit (327 aa).

N-acetylalanine is present on Ala-2. Mn(2+)-binding residues include Asp-63, His-65, Asp-91, and Asn-123. Catalysis depends on His-124, which acts as the Proton donor. 2 residues coordinate Mn(2+): His-172 and His-247. The interval 305–327 (QYGGLNSGRPVTPPRTANPPKKR) is disordered. At Thr-316 the chain carries Phosphothreonine.

Belongs to the PPP phosphatase family. PP-1 subfamily. In terms of assembly, PP1 comprises a catalytic subunit, PPP1CA, PPP1CB or PPP1CC, which is folded into its native form by inhibitor 2 and glycogen synthetase kinase 3, and then complexed to one or several targeting or regulatory subunits. The targeting or regulatory subunits determine the substrate specificity of PP1. PPP1R12A, PPP1R12B and PPP1R12C mediate binding to myosin. PPP1R3A (in skeletal muscle), PPP1R3B (in liver), PPP1R3C, PPP1R3D and PPP1R3F (in brain) mediate binding to glycogen. PPP1R15A and PPP1R15B mediate binding to EIF2S1. Part of a complex containing PPP1R15B, PP1 and NCK1/2. Interacts with PPP1R7 and PPP1R12C. Interacts with PPP1R16B. Component of the PTW/PP1 phosphatase complex, composed of PPP1R10/PNUTS, TOX4, WDR82, and PPP1CA or PPP1CB or PPP1CC. Interacts with PPP1R8. Interacts with PPP1R12A and NUAK1; the interaction is direct. Interacts with TRIM28; the interaction is weak. Interacts with FOXP3. Interacts with RRP1B. Interacts with SERPINE1. Interacts with LZTR1. Component of the SHOC2-MRAS-PP1c (SMP) complex consisting of SHOC2, GTP-bound M-Ras/MRAS and the catalytic subunit of protein phosphatase 1 (either PPP1CA, PPP1CB or PPP1CC). SHOC2 and PP1c preferably bind M-Ras/MRAS, but they also bind K-Ras/KRAS, N-Ras/NRAS and H-Ras/HRAS; these interactions are GTP-dependent and both SHOC2 and PP1c are required to form a stable complex. Interacts with SHOC2 in the absence of Ras GTPases. Mn(2+) is required as a cofactor.

Its subcellular location is the cytoplasm. The protein resides in the nucleus. It localises to the nucleoplasm. The protein localises to the nucleolus. The enzyme catalyses O-phospho-L-seryl-[protein] + H2O = L-seryl-[protein] + phosphate. The catalysed reaction is O-phospho-L-threonyl-[protein] + H2O = L-threonyl-[protein] + phosphate. It catalyses the reaction O-phospho-L-seryl-[myosin light chain] + H2O = L-seryl-[myosin light chain] + phosphate. It carries out the reaction O-phospho-L-threonyl-[myosin light chain] + H2O = L-threonyl-[myosin light chain] + phosphate. Its activity is regulated as follows. Inhibited by the toxins okadaic acid, tautomycin and microcystin Leu-Arg. The phosphatase activity of the PPP1R15A-PP1 complex toward EIF2S1 is specifically inhibited by Salubrinal, a drug that protects cells from endoplasmic reticulum stress. Protein phosphatase that associates with over 200 regulatory proteins to form highly specific holoenzymes which dephosphorylate hundreds of biological targets. Protein phosphatase (PP1) is essential for cell division, it participates in the regulation of glycogen metabolism, muscle contractility and protein synthesis. Involved in regulation of ionic conductances and long-term synaptic plasticity. Component of the PTW/PP1 phosphatase complex, which plays a role in the control of chromatin structure and cell cycle progression during the transition from mitosis into interphase. In balance with CSNK1D and CSNK1E, determines the circadian period length, through the regulation of the speed and rhythmicity of PER1 and PER2 phosphorylation. May dephosphorylate CSNK1D and CSNK1E. Core component of the SHOC2-MRAS-PP1c (SMP) holophosphatase complex that regulates the MAPK pathway activation. The SMP complex specifically dephosphorylates the inhibitory phosphorylation at 'Ser-259' of RAF1 kinase, 'Ser-365' of BRAF kinase and 'Ser-214' of ARAF kinase, stimulating their kinase activities. The SMP complex enhances the dephosphorylation activity and substrate specificity of PP1c. This Bos taurus (Bovine) protein is Serine/threonine-protein phosphatase PP1-beta catalytic subunit (PPP1CB).